Consider the following 203-residue polypeptide: Probable nicotinate-nucleotide adenylyltransferase (203 aa).

This sequence belongs to the NadD family.

It carries out the reaction nicotinate beta-D-ribonucleotide + ATP + H(+) = deamido-NAD(+) + diphosphate. It participates in cofactor biosynthesis; NAD(+) biosynthesis; deamido-NAD(+) from nicotinate D-ribonucleotide: step 1/1. In terms of biological role, catalyzes the reversible adenylation of nicotinate mononucleotide (NaMN) to nicotinic acid adenine dinucleotide (NaAD). In Prosthecochloris aestuarii (strain DSM 271 / SK 413), this protein is Probable nicotinate-nucleotide adenylyltransferase.